A 541-amino-acid polypeptide reads, in one-letter code: Peptide chain release factor 3 (541 aa).

One can recognise a tr-type G domain in the interval 14–283 (EARRNFAIIS…AFLDYALKPG (270 aa)). Residues 23-30 (SHPDAGKT), 91-95 (DTPGH), and 145-148 (NKLD) contribute to the GTP site.

Belongs to the TRAFAC class translation factor GTPase superfamily. Classic translation factor GTPase family. PrfC subfamily.

The protein resides in the cytoplasm. Functionally, increases the formation of ribosomal termination complexes and stimulates activities of RF-1 and RF-2. It binds guanine nucleotides and has strong preference for UGA stop codons. It may interact directly with the ribosome. The stimulation of RF-1 and RF-2 is significantly reduced by GTP and GDP, but not by GMP. The chain is Peptide chain release factor 3 from Acaryochloris marina (strain MBIC 11017).